Here is an 894-residue protein sequence, read N- to C-terminus: Protein SEY1 (894 aa).

The segment at 1-64 (MGLDVDSVPI…PRALEPAQVT (64 aa)) is disordered. Residues 1–768 (MGLDVDSVPI…KRGTVSSMSQ (768 aa)) lie on the Cytoplasmic side of the membrane. Positions 9–24 (PIAEAAAPSSMAATEP) are enriched in low complexity. Positions 40–53 (APMNTDSSRETMPT) are enriched in polar residues. A GB1/RHD3-type G domain is found at 137-359 (GFGYDICAVL…DESYVFKTEY (223 aa)). A GTP-binding site is contributed by 147–154 (GSQSTGKS). Residues 536 to 559 (KVDDERAQLLDELHTLARTLRANE) are a coiled coil. A helical membrane pass occupies residues 769 to 789 (VPIWMYGVLVVLGWNEAMAVL). Residues 790-792 (RNP) lie on the Lumenal side of the membrane. Residues 793 to 813 (VYFTLLCMVLATAYVIWRLNL) traverse the membrane as a helical segment. Over 814 to 894 (GTPVLALASG…DSHPRLPASF (81 aa)) the chain is Cytoplasmic. The interval 841 to 894 (DGTPPSANRAREYRVPSGSTAHVSEKTPHRPLTTSGAAEADTVEDSHPRLPASF) is disordered.

This sequence belongs to the TRAFAC class dynamin-like GTPase superfamily. GB1/RHD3 GTPase family. RHD3 subfamily.

It is found in the endoplasmic reticulum membrane. Cooperates with the reticulon proteins and tubule-shaping DP1 family proteins to generate and maintain the structure of the tubular endoplasmic reticulum network. Has GTPase activity, which is required for its function in ER organization. The sequence is that of Protein SEY1 from Malassezia globosa (strain ATCC MYA-4612 / CBS 7966) (Dandruff-associated fungus).